Consider the following 353-residue polypeptide: Photosystem II D2 protein (353 aa).

An N-acetylthreonine modification is found at T2. T2 carries the post-translational modification Phosphothreonine. Residues 41–61 (CAYFAVGGWFTGTTFVTSWYT) traverse the membrane as a helical segment. H118 is a chlorophyll a binding site. The helical transmembrane segment at 125 to 141 (GFMLRQFELARSVQLRP) threads the bilayer. Pheophytin a contacts are provided by Q130 and N143. Residues 153-166 (VFVSVFLIYPLGQS) traverse the membrane as a helical segment. Residue H198 coordinates chlorophyll a. Residues 208–228 (AALLCAIHGATVENTLFEDGD) form a helical membrane-spanning segment. A plastoquinone is bound by residues H215 and F262. H215 is a binding site for Fe cation. H269 is a Fe cation binding site. A helical transmembrane segment spans residues 279 to 295 (GLWMSALGVVGLALNLR).

Belongs to the reaction center PufL/M/PsbA/D family. PSII is composed of 1 copy each of membrane proteins PsbA, PsbB, PsbC, PsbD, PsbE, PsbF, PsbH, PsbI, PsbJ, PsbK, PsbL, PsbM, PsbT, PsbX, PsbY, PsbZ, Psb30/Ycf12, at least 3 peripheral proteins of the oxygen-evolving complex and a large number of cofactors. It forms dimeric complexes. Requires The D1/D2 heterodimer binds P680, chlorophylls that are the primary electron donor of PSII, and subsequent electron acceptors. It shares a non-heme iron and each subunit binds pheophytin, quinone, additional chlorophylls, carotenoids and lipids. There is also a Cl(-1) ion associated with D1 and D2, which is required for oxygen evolution. The PSII complex binds additional chlorophylls, carotenoids and specific lipids. as cofactor.

The protein resides in the plastid. Its subcellular location is the chloroplast thylakoid membrane. The enzyme catalyses 2 a plastoquinone + 4 hnu + 2 H2O = 2 a plastoquinol + O2. Functionally, photosystem II (PSII) is a light-driven water:plastoquinone oxidoreductase that uses light energy to abstract electrons from H(2)O, generating O(2) and a proton gradient subsequently used for ATP formation. It consists of a core antenna complex that captures photons, and an electron transfer chain that converts photonic excitation into a charge separation. The D1/D2 (PsbA/PsbD) reaction center heterodimer binds P680, the primary electron donor of PSII as well as several subsequent electron acceptors. D2 is needed for assembly of a stable PSII complex. This chain is Photosystem II D2 protein, found in Lactuca sativa (Garden lettuce).